The sequence spans 103 residues: Large ribosomal subunit protein bL21 (103 aa).

It belongs to the bacterial ribosomal protein bL21 family. In terms of assembly, part of the 50S ribosomal subunit. Contacts protein L20.

In terms of biological role, this protein binds to 23S rRNA in the presence of protein L20. In Sodalis glossinidius (strain morsitans), this protein is Large ribosomal subunit protein bL21.